The following is a 953-amino-acid chain: Serine/threonine-protein kinase ppk30 (953 aa).

One can recognise a Protein kinase domain in the interval 57 to 326; that stretch reads VIIQRYLSEG…IYQTLKEIME (270 aa). ATP-binding positions include 63–71 and K85; that span reads LSEGGFSHV. D187 acts as the Proton acceptor in catalysis. Disordered regions lie at residues 343-402, 427-451, 538-606, 641-669, 748-791, and 864-953; these read ASTY…PSVS, SPIP…RRAD, RFLP…NRMN, RKEP…NKDV, STSQ…RPIG, and RKSC…ESLE. Composition is skewed to polar residues over residues 355–369, 378–402, and 433–444; these read RTPS…SRPA, TVQT…PSVS, and KSYSATIQTPRS. The segment covering 547–557 has biased composition (low complexity); the sequence is PSEFSSSVGSK. Residues 558–575 show a composition bias toward polar residues; the sequence is QNLSMDIPSVQNVSTKQK. A compositionally biased stretch (basic and acidic residues) spans 656-669; sequence LKKDQSSEVANKDV. Residues 748 to 766 show a composition bias toward polar residues; sequence STSQVSHTQRLQQSISTSL. 3 stretches are compositionally biased toward basic and acidic residues: residues 767–778, 865–884, and 937–953; these read ERVKSNTKKESN, KSCE…DLER, and PHIE…ESLE. S872 and S875 each carry phosphoserine.

This sequence belongs to the protein kinase superfamily. Ser/Thr protein kinase family.

The protein resides in the cytoplasm. The catalysed reaction is L-seryl-[protein] + ATP = O-phospho-L-seryl-[protein] + ADP + H(+). It catalyses the reaction L-threonyl-[protein] + ATP = O-phospho-L-threonyl-[protein] + ADP + H(+). This chain is Serine/threonine-protein kinase ppk30 (ppk30), found in Schizosaccharomyces pombe (strain 972 / ATCC 24843) (Fission yeast).